A 919-amino-acid polypeptide reads, in one-letter code: Transcriptional regulatory protein EDS1 (919 aa).

The disordered stretch occupies residues 1-54 (MSHHVPNLYGTPIRDPHEHKRNSASMGEVNQSVSSRNCERGSEKGTKQRKKASR). Positions 23–36 (SASMGEVNQSVSSR) are enriched in polar residues. Over residues 37–46 (NCERGSEKGT) the composition is skewed to basic and acidic residues. The zn(2)-C6 fungal-type DNA-binding region spans 56–85 (CDQCRRKRIKCRFDKHTGVCQGCLEVGEKC). A disordered region spans residues 297-338 (AGCPNKKLGTDGRSDKWDKNSTWKPVYRSSNPSHPSTEKNVS). Residues 304–317 (LGTDGRSDKWDKNS) are compositionally biased toward basic and acidic residues. A compositionally biased stretch (polar residues) spans 318-338 (TWKPVYRSSNPSHPSTEKNVS).

As to quaternary structure, binds DNA in a sequence-specific manner.

Its subcellular location is the nucleus. In Saccharomyces cerevisiae (strain Lalvin EC1118 / Prise de mousse) (Baker's yeast), this protein is Transcriptional regulatory protein EDS1 (EDS1).